A 705-amino-acid chain; its full sequence is Variediene synthase (705 aa).

The terpene cyclase stretch occupies residues 9–331 (LNSTLSSVVE…RCPRYHPWLC (323 aa)). Aspartate 100 is a binding site for Mg(2+). Substrate contacts are provided by residues aspartate 100, 186 to 189 (RIID), asparagine 230, 234 to 238 (SFDIE), and 325 to 326 (RY). The DDXXD 1 motif lies at 100-104 (DNVVE). The NSE/DTE signature appears at 230 to 238 (NDYFSFDIE). The segment at 332-705 (KEAASLLHQD…VRLLIHRLKV (374 aa)) is prenyltransferase. The span at 349 to 366 (GRKPQALEEYRSRSHSES) shows a compositional bias: basic and acidic residues. Positions 349 to 374 (GRKPQALEEYRSRSHSESDLSDASPT) are disordered. Lysine 424, arginine 427, and histidine 456 together coordinate isopentenyl diphosphate. Mg(2+)-binding residues include aspartate 463 and aspartate 467. Positions 463–467 (DDIED) match the DDXXD 2 motif. Arginine 472 is a dimethylallyl diphosphate binding site. Arginine 473 is a binding site for isopentenyl diphosphate. Dimethylallyl diphosphate-binding residues include lysine 550, threonine 551, glutamine 589, asparagine 596, lysine 605, and lysine 615.

This sequence in the N-terminal section; belongs to the terpene synthase family. The protein in the C-terminal section; belongs to the FPP/GGPP synthase family. As to quaternary structure, hexamer. Requires Mg(2+) as cofactor.

It catalyses the reaction isopentenyl diphosphate + (2E,6E)-farnesyl diphosphate = (2E,6E,10E)-geranylgeranyl diphosphate + diphosphate. It carries out the reaction isopentenyl diphosphate + (2E,6E,10E)-geranylgeranyl diphosphate = (2E,6E,10E,14E)-geranylfarnesyl diphosphate + diphosphate. The catalysed reaction is (2E,6E,10E)-geranylgeranyl diphosphate = variediene + diphosphate. The enzyme catalyses (2E,6E,10E,14E)-geranylfarnesyl diphosphate = (R,2E)-alpha-cericerene + diphosphate. It participates in secondary metabolite biosynthesis; terpenoid biosynthesis. Bifunctional terpene synthase that converts dimethylallyl diphosphate (DMAPP) and isopentenyl diphosphate (IPP) into variediene as a single product. The C-terminal prenyltransferase (PT) domain of EvVS catalyzes formation of geranylgeranyl pyrophosphate (GGPP), whereas the N-terminal terpene cyclase (TC) domain catalyzes the cyclization of GGPP to variediene. The PT domain can also synthesize geranylfarnesyl pyrophosphate (GFPP) from the C5 isoprene units in vitro, while the TC domain is able to cyclize GFPP to the sesterterpene (2E)-alpha-cericerene. The protein is Variediene synthase of Emericella variicolor (Aspergillus stellatus).